The sequence spans 261 residues: Hydroxyethylthiazole kinase (261 aa).

Met-40 is a binding site for substrate. Residues Lys-116 and Thr-162 each contribute to the ATP site. Gly-189 contacts substrate.

This sequence belongs to the Thz kinase family. Mg(2+) is required as a cofactor.

It catalyses the reaction 5-(2-hydroxyethyl)-4-methylthiazole + ATP = 4-methyl-5-(2-phosphooxyethyl)-thiazole + ADP + H(+). It functions in the pathway cofactor biosynthesis; thiamine diphosphate biosynthesis; 4-methyl-5-(2-phosphoethyl)-thiazole from 5-(2-hydroxyethyl)-4-methylthiazole: step 1/1. In terms of biological role, catalyzes the phosphorylation of the hydroxyl group of 4-methyl-5-beta-hydroxyethylthiazole (THZ). The polypeptide is Hydroxyethylthiazole kinase (Methanosarcina mazei (strain ATCC BAA-159 / DSM 3647 / Goe1 / Go1 / JCM 11833 / OCM 88) (Methanosarcina frisia)).